A 158-amino-acid chain; its full sequence is SsrA-binding protein (158 aa).

This sequence belongs to the SmpB family.

The protein resides in the cytoplasm. Its function is as follows. Required for rescue of stalled ribosomes mediated by trans-translation. Binds to transfer-messenger RNA (tmRNA), required for stable association of tmRNA with ribosomes. tmRNA and SmpB together mimic tRNA shape, replacing the anticodon stem-loop with SmpB. tmRNA is encoded by the ssrA gene; the 2 termini fold to resemble tRNA(Ala) and it encodes a 'tag peptide', a short internal open reading frame. During trans-translation Ala-aminoacylated tmRNA acts like a tRNA, entering the A-site of stalled ribosomes, displacing the stalled mRNA. The ribosome then switches to translate the ORF on the tmRNA; the nascent peptide is terminated with the 'tag peptide' encoded by the tmRNA and targeted for degradation. The ribosome is freed to recommence translation, which seems to be the essential function of trans-translation. The polypeptide is SsrA-binding protein (Bifidobacterium longum (strain DJO10A)).